A 382-amino-acid chain; its full sequence is Succinate--CoA ligase [ADP-forming] subunit beta (382 aa).

One can recognise an ATP-grasp domain in the interval 9–240; sequence KELFSKYGVK…PRDVTEFEAY (232 aa). Residues K45, 52 to 54, V94, and E99 each bind ATP; that span reads GRG. Mg(2+) is bound by residues N193 and D207. Residues N260 and 317 to 319 contribute to the substrate site; that span reads GIT.

This sequence belongs to the succinate/malate CoA ligase beta subunit family. Heterotetramer of two alpha and two beta subunits. Requires Mg(2+) as cofactor.

It carries out the reaction succinate + ATP + CoA = succinyl-CoA + ADP + phosphate. The catalysed reaction is GTP + succinate + CoA = succinyl-CoA + GDP + phosphate. It participates in carbohydrate metabolism; tricarboxylic acid cycle; succinate from succinyl-CoA (ligase route): step 1/1. In terms of biological role, succinyl-CoA synthetase functions in the citric acid cycle (TCA), coupling the hydrolysis of succinyl-CoA to the synthesis of either ATP or GTP and thus represents the only step of substrate-level phosphorylation in the TCA. The beta subunit provides nucleotide specificity of the enzyme and binds the substrate succinate, while the binding sites for coenzyme A and phosphate are found in the alpha subunit. This Pyrobaculum aerophilum (strain ATCC 51768 / DSM 7523 / JCM 9630 / CIP 104966 / NBRC 100827 / IM2) protein is Succinate--CoA ligase [ADP-forming] subunit beta.